The chain runs to 323 residues: Ankyrin repeat and SOCS box protein 11 (323 aa).

6 ANK repeats span residues 64-93 (ADRS…NVNL), 97-126 (NRVS…HVNG), 130-159 (HGAT…KAQL), 162-191 (HLAS…NIDQ), 195-224 (HLGT…NVNH), and 227-256 (WLDT…NLKC). The region spanning 273 to 323 (SVEQALLLREGPPALSQLCRLCVRKCLGRNCHKTIHKLYLPDPLEKFLLYQ) is the SOCS box domain.

The protein belongs to the ankyrin SOCS box (ASB) family. As to quaternary structure, substrate-recognition component of the ECS(ASB11) complex, composed of ASB11, CUL5, ELOB, ELOC and RNF7/RBX2.

The protein resides in the endoplasmic reticulum. It participates in protein modification; protein ubiquitination. Substrate-recognition component of a cullin-5-RING E3 ubiquitin-protein ligase complex (ECS complex, also named CRL5 complex), which mediates the ubiquitination and subsequent proteasomal degradation of target proteins, such as BIK, DIRAS2 and RPN1. The ECS(ASB11) complex acts as a regulator of the endoplasmic reticulum unfolded protein response by mediating ubiquitination and degradation of BIK. This Bos taurus (Bovine) protein is Ankyrin repeat and SOCS box protein 11 (ASB11).